Here is an 81-residue protein sequence, read N- to C-terminus: Large ribosomal subunit protein bL27 (81 aa).

Polar residues predominate over residues 1–11 (MATSKSGGSSK). Residues 1-23 (MATSKSGGSSKNGRDSISKRLGV) are disordered.

The protein belongs to the bacterial ribosomal protein bL27 family.

This chain is Large ribosomal subunit protein bL27, found in Borrelia garinii subsp. bavariensis (strain ATCC BAA-2496 / DSM 23469 / PBi) (Borreliella bavariensis).